A 205-amino-acid chain; its full sequence is Golgi to ER traffic protein 1 (205 aa).

Over 1-9 (MFELQPSSI) the chain is Lumenal. A helical transmembrane segment spans residues 10–29 (VVLVFCVLAIKVCISLIGKT). The Cytoplasmic segment spans residues 30–116 (TIQDRIWYLY…QISKLVNLAI (87 aa)). The stretch at 53-103 (ALAQKREELVRVNKERRAISAQDEYAKWTKLNRQFDKLNSEVNDLAEATSS) forms a coiled coil. A helical transmembrane segment spans residues 117-137 (AATTTAPIWFSRIWYRKVVLF). Over 138 to 161 (YLPPKVFPYYIEWVLALPFIVTGG) the chain is Lumenal. Residues 162 to 178 (VGLTVWMFALNSVLSSL) traverse the membrane as a helical segment. Topologically, residues 179-205 (EFLIKFYLEEPVKKPEAPAASEAQTKQ) are cytoplasmic.

This sequence belongs to the WRB/GET1 family. In terms of assembly, component of the Golgi to ER traffic (GET) complex, which is composed of GET1, GET2 and GET3. Within the complex, GET1 and GET2 form a heterotetramer which is stabilized by phosphatidylinositol binding and which binds to the GET3 homodimer.

It is found in the endoplasmic reticulum membrane. The protein localises to the golgi apparatus membrane. Required for the post-translational delivery of tail-anchored (TA) proteins to the endoplasmic reticulum. Together with GET2, acts as a membrane receptor for soluble GET3, which recognizes and selectively binds the transmembrane domain of TA proteins in the cytosol. The GET complex cooperates with the HDEL receptor ERD2 to mediate the ATP-dependent retrieval of resident ER proteins that contain a C-terminal H-D-E-L retention signal from the Golgi to the ER. The sequence is that of Golgi to ER traffic protein 1 from Clavispora lusitaniae (strain ATCC 42720) (Yeast).